Consider the following 167-residue polypeptide: Cofilin-2 (167 aa).

One can recognise an ADF-H domain in the interval 4-153; it reads GVTVNDEVIK…KDRCTLADKL (150 aa). Positions 30 to 34 match the Nuclear localization signal motif; it reads KKRKK.

The protein belongs to the actin-binding proteins ADF family.

Its subcellular location is the nucleus matrix. The protein resides in the cytoplasm. It localises to the cytoskeleton. In terms of biological role, controls reversibly actin polymerization and depolymerization in a pH-sensitive manner. It has the ability to bind G- and F-actin in a 1:1 ratio of cofilin to actin. It is the major component of intranuclear and cytoplasmic actin rods. The protein is Cofilin-2 (cfl2) of Xenopus tropicalis (Western clawed frog).